The chain runs to 490 residues: ATP synthase subunit beta, chloroplastic (490 aa).

170-177 (GGAGVGKT) is a binding site for ATP.

It belongs to the ATPase alpha/beta chains family. In terms of assembly, F-type ATPases have 2 components, CF(1) - the catalytic core - and CF(0) - the membrane proton channel. CF(1) has five subunits: alpha(3), beta(3), gamma(1), delta(1), epsilon(1). CF(0) has four main subunits: a(1), b(1), b'(1) and c(9-12).

It localises to the plastid. It is found in the chloroplast thylakoid membrane. It carries out the reaction ATP + H2O + 4 H(+)(in) = ADP + phosphate + 5 H(+)(out). Produces ATP from ADP in the presence of a proton gradient across the membrane. The catalytic sites are hosted primarily by the beta subunits. The sequence is that of ATP synthase subunit beta, chloroplastic from Ipomoea wrightii (Wright's morning glory).